A 439-amino-acid polypeptide reads, in one-letter code: Cell division protein FtsA (439 aa).

This sequence belongs to the FtsA/MreB family. Self-interacts. Interacts with FtsZ.

The protein resides in the cell inner membrane. Cell division protein that is involved in the assembly of the Z ring. May serve as a membrane anchor for the Z ring. The polypeptide is Cell division protein FtsA (Shigella flexneri).